The sequence spans 290 residues: Malonyl-[acyl-carrier protein] O-methyltransferase (290 aa).

The protein belongs to the methyltransferase superfamily.

It catalyses the reaction malonyl-[ACP] + S-adenosyl-L-methionine = malonyl-[ACP] methyl ester + S-adenosyl-L-homocysteine. The protein operates within cofactor biosynthesis; biotin biosynthesis. Converts the free carboxyl group of a malonyl-thioester to its methyl ester by transfer of a methyl group from S-adenosyl-L-methionine (SAM). It allows to synthesize pimeloyl-ACP via the fatty acid synthetic pathway. This Gallionella capsiferriformans (strain ES-2) (Gallionella ferruginea capsiferriformans (strain ES-2)) protein is Malonyl-[acyl-carrier protein] O-methyltransferase.